A 517-amino-acid polypeptide reads, in one-letter code: Bifunctional purine biosynthesis protein PurH (517 aa).

Residues 1 to 146 form the MGS-like domain; sequence MGRLVLLSVS…KNFAHLTVLC (146 aa).

This sequence belongs to the PurH family.

The enzyme catalyses (6R)-10-formyltetrahydrofolate + 5-amino-1-(5-phospho-beta-D-ribosyl)imidazole-4-carboxamide = 5-formamido-1-(5-phospho-D-ribosyl)imidazole-4-carboxamide + (6S)-5,6,7,8-tetrahydrofolate. It carries out the reaction IMP + H2O = 5-formamido-1-(5-phospho-D-ribosyl)imidazole-4-carboxamide. It participates in purine metabolism; IMP biosynthesis via de novo pathway; 5-formamido-1-(5-phospho-D-ribosyl)imidazole-4-carboxamide from 5-amino-1-(5-phospho-D-ribosyl)imidazole-4-carboxamide (10-formyl THF route): step 1/1. Its pathway is purine metabolism; IMP biosynthesis via de novo pathway; IMP from 5-formamido-1-(5-phospho-D-ribosyl)imidazole-4-carboxamide: step 1/1. The sequence is that of Bifunctional purine biosynthesis protein PurH from Gloeothece citriformis (strain PCC 7424) (Cyanothece sp. (strain PCC 7424)).